The primary structure comprises 434 residues: Mitochondrial distribution and morphology protein 10 (434 aa).

It belongs to the MDM10 family. Component of the ER-mitochondria encounter structure (ERMES) or MDM complex, composed of mmm1, mdm10, mdm12 and mdm34. Associates with the mitochondrial outer membrane sorting assembly machinery SAM(core) complex.

The protein resides in the mitochondrion outer membrane. In terms of biological role, component of the ERMES/MDM complex, which serves as a molecular tether to connect the endoplasmic reticulum and mitochondria. Components of this complex are involved in the control of mitochondrial shape and protein biogenesis and may function in phospholipid exchange. mdm10 is involved in the late assembly steps of the general translocase of the mitochondrial outer membrane (TOM complex). Functions in the tom40-specific route of the assembly of outer membrane beta-barrel proteins, including the association of tom40 with the receptor tom22 and small TOM proteins. Can associate with the SAM(core) complex as well as the mdm12-mmm1 complex, both involved in late steps of the major beta-barrel assembly pathway, that is responsible for biogenesis of all outer membrane beta-barrel proteins. May act as a switch that shuttles between both complexes and channels precursor proteins into the tom40-specific pathway. Plays a role in mitochondrial morphology and in the inheritance of mitochondria. In Aspergillus niger (strain ATCC MYA-4892 / CBS 513.88 / FGSC A1513), this protein is Mitochondrial distribution and morphology protein 10 (mdmB).